Consider the following 248-residue polypeptide: Putative transposase YncI (248 aa).

The protein belongs to the transposase 11 family.

This chain is Putative transposase YncI (yncI), found in Escherichia coli (strain K12).